A 122-amino-acid polypeptide reads, in one-letter code: Large ribosomal subunit protein uL18 (122 aa).

Belongs to the universal ribosomal protein uL18 family. As to quaternary structure, part of the 50S ribosomal subunit; part of the 5S rRNA/L5/L18/L25 subcomplex. Contacts the 5S and 23S rRNAs.

Functionally, this is one of the proteins that bind and probably mediate the attachment of the 5S RNA into the large ribosomal subunit, where it forms part of the central protuberance. This Pseudothermotoga lettingae (strain ATCC BAA-301 / DSM 14385 / NBRC 107922 / TMO) (Thermotoga lettingae) protein is Large ribosomal subunit protein uL18.